We begin with the raw amino-acid sequence, 166 residues long: Glycine cleavage system H protein 3, mitochondrial (166 aa).

Residues methionine 1–phenylalanine 35 constitute a mitochondrion transit peptide. Positions valine 57 to lysine 139 constitute a Lipoyl-binding domain. At lysine 98 the chain carries N6-lipoyllysine. Phosphoserine is present on serine 141.

It belongs to the GcvH family. As to quaternary structure, the glycine cleavage system is composed of four proteins: P, T, L and H. Requires (R)-lipoate as cofactor. Post-translationally, S-nitrosylated and/or glutathionylated at unknown positions in response to nitric oxide.

It localises to the mitochondrion. With respect to regulation, inhibited by harpin, S-nitrosoglutathione (GSNO), nitric oxide, N-ethylmaleimide and 5,5'-dithiobis-(2-nitrobenzoic acid). Functionally, the glycine decarboxylase (GDC) or glycine cleavage system catalyzes the degradation of glycine. The H protein shuttles the methylamine group of glycine from the P protein to the T protein. This is Glycine cleavage system H protein 3, mitochondrial (GDH3) from Arabidopsis thaliana (Mouse-ear cress).